A 298-amino-acid polypeptide reads, in one-letter code: ADP/ATP translocase 1 (298 aa).

Over 1–7 (MSDQALS) the chain is Mitochondrial intermembrane. Ser-2 carries the N-acetylserine modification. One copy of the Solcar 1 repeat lies at 6 to 98 (LSFLKDFLAG…FAFKDKYKQI (93 aa)). Phosphoserine is present on Ser-7. A helical transmembrane segment spans residues 8–37 (FLKDFLAGGVAAAVSKTAVAPIERVKLLLQ). The Mitochondrial matrix portion of the chain corresponds to 38 to 74 (VQHASKQISAEKQYKGIIDCVVRIPKEQGFLSFWRGN). Residue Lys-52 is modified to N6,N6,N6-trimethyllysine. A helical membrane pass occupies residues 75–99 (LANVIRYFPTQALNFAFKDKYKQIF). Positions 80 and 92 each coordinate ADP. Over 100 to 109 (LGGVDRHKQF) the chain is Mitochondrial intermembrane. The helical transmembrane segment at 110 to 130 (WRYFAGNLASGGAAGATSLCF) threads the bilayer. 2 Solcar repeats span residues 111–201 (RYFA…AKGM) and 212–297 (VSWM…IKKY). Residues 131–178 (VYPLDFARTRLAADVGKGAAQREFSGLGNCLTKIFKSDGLRGLYQGFN) are Mitochondrial matrix-facing. Lys-147 is modified (N6-succinyllysine). Residue Cys-160 is modified to S-nitrosocysteine. Residues 179–199 (VSVQGIIIYRAAYFGVYDTAK) traverse the membrane as a helical segment. The Mitochondrial intermembrane portion of the chain corresponds to 200-210 (GMLPDPKNVHI). The chain crosses the membrane as a helical span at residues 211–231 (IVSWMIAQTVTAVAGLVSYPF). Residues 232 to 273 (DTVRRRMMMQSGRKGADIMYTGTVDCWKKIAKDEGAKAFFKG) lie on the Mitochondrial matrix side of the membrane. An ADP-binding site is contributed by Arg-235. Positions 235 to 240 (RRRMMM) are important for transport activity. The Nucleotide carrier signature motif motif lies at 235 to 240 (RRRMMM). An N6-succinyllysine mark is found at Lys-245 and Lys-272. Residues 274–291 (AWSNVLRGMGGAFVLVLY) form a helical membrane-spanning segment. Over 292–298 (DEIKKYV) the chain is Mitochondrial intermembrane.

The protein belongs to the mitochondrial carrier (TC 2.A.29) family. In terms of assembly, monomer. Found in a complex with ARL2, ARL2BP and SLC25A4/ANT1. Interacts with ARL2BP. Interacts with TIMM44; leading to inhibit the presequence translocase TIMM23, thereby promoting stabilization of PINK1. Post-translationally, under cell death induction, transglutaminated by TGM2. Transglutamination leads to formation of covalent cross-links between a glutamine and the epsilon-amino group of a lysine residue, forming polymers.

It localises to the mitochondrion inner membrane. The protein resides in the membrane. The enzyme catalyses ADP(in) + ATP(out) = ADP(out) + ATP(in). The catalysed reaction is H(+)(in) = H(+)(out). With respect to regulation, the matrix-open state (m-state) is inhibited by the membrane-permeable bongkrekic acid (BKA). The cytoplasmic-open state (c-state) is inhibited by the membrane-impermeable toxic inhibitor carboxyatractyloside (CATR). Proton transporter activity is inhibited by ADP:ATP antiporter activity. ADP:ATP antiporter that mediates import of ADP into the mitochondrial matrix for ATP synthesis, and export of ATP out to fuel the cell. Cycles between the cytoplasmic-open state (c-state) and the matrix-open state (m-state): operates by the alternating access mechanism with a single substrate-binding site intermittently exposed to either the cytosolic (c-state) or matrix (m-state) side of the inner mitochondrial membrane. In addition to its ADP:ATP antiporter activity, also involved in mitochondrial uncoupling and mitochondrial permeability transition pore (mPTP) activity. Plays a role in mitochondrial uncoupling by acting as a proton transporter: proton transport uncouples the proton flows via the electron transport chain and ATP synthase to reduce the efficiency of ATP production and cause mitochondrial thermogenesis. Proton transporter activity is inhibited by ADP:ATP antiporter activity, suggesting that SLC25A4/ANT1 acts as a master regulator of mitochondrial energy output by maintaining a delicate balance between ATP production (ADP:ATP antiporter activity) and thermogenesis (proton transporter activity). Proton transporter activity requires free fatty acids as cofactor, but does not transport it. Probably mediates mitochondrial uncoupling in tissues that do not express UCP1. Also plays a key role in mPTP opening, a non-specific pore that enables free passage of the mitochondrial membranes to solutes of up to 1.5 kDa, and which contributes to cell death. It is however unclear if SLC25A4/ANT1 constitutes a pore-forming component of mPTP or regulates it. Acts as a regulator of mitophagy independently of ADP:ATP antiporter activity: promotes mitophagy via interaction with TIMM44, leading to inhibit the presequence translocase TIMM23, thereby promoting stabilization of PINK1. This Oryctolagus cuniculus (Rabbit) protein is ADP/ATP translocase 1.